The following is a 284-amino-acid chain: NAD kinase (284 aa).

Catalysis depends on aspartate 65, which acts as the Proton acceptor. NAD(+) is bound by residues 65 to 66, 139 to 140, arginine 150, arginine 167, aspartate 169, and glutamine 239; these read DG and ND.

Belongs to the NAD kinase family. The cofactor is a divalent metal cation.

The protein localises to the cytoplasm. The catalysed reaction is NAD(+) + ATP = ADP + NADP(+) + H(+). Its function is as follows. Involved in the regulation of the intracellular balance of NAD and NADP, and is a key enzyme in the biosynthesis of NADP. Catalyzes specifically the phosphorylation on 2'-hydroxyl of the adenosine moiety of NAD to yield NADP. This Desulfatibacillum aliphaticivorans protein is NAD kinase.